We begin with the raw amino-acid sequence, 631 residues long: Chaperone protein HtpG (631 aa).

Positions 1-338 (MILKEQETLG…CNDLPLNISR (338 aa)) are a; substrate-binding. Residues 339 to 554 (EMLQHNRITQ…SNNMTTHMAK (216 aa)) are b. Residues 555–631 (LIVASGQNKP…KLLNHDTIVN (77 aa)) are c.

The protein belongs to the heat shock protein 90 family. In terms of assembly, homodimer.

The protein localises to the cytoplasm. In terms of biological role, molecular chaperone. Has ATPase activity. The protein is Chaperone protein HtpG of Baumannia cicadellinicola subsp. Homalodisca coagulata.